The sequence spans 314 residues: Carbamate kinase (314 aa).

Belongs to the carbamate kinase family.

Its subcellular location is the cytoplasm. The enzyme catalyses hydrogencarbonate + NH4(+) + ATP = carbamoyl phosphate + ADP + H2O + H(+). The protein operates within metabolic intermediate metabolism; carbamoyl phosphate degradation; CO(2) and NH(3) from carbamoyl phosphate: step 1/1. This is Carbamate kinase (arcC) from Latilactobacillus sakei (Lactobacillus sakei).